A 392-amino-acid chain; its full sequence is uncharacterized protein (392 aa).

The protein belongs to the glycosyltransferase 2 family.

This is an uncharacterized protein from Bacillus subtilis (strain 168).